We begin with the raw amino-acid sequence, 774 residues long: MTAKPAAAAARATVYGYPRQGPHRELKKAIEGYWKGRVDADALRETAAELRRGTWQQLAEAGVHEVPTGDFSYYDHVLDTSVMVGAVPERHRASVEADALDGYFAMARGTQDVAPLEMTKWFDTNYHYLVPELGPDTVFSADSAKQVAEFREALALGWTPRPVLVGPLTYLLLAKAAPGVAADFEPLTLLDRLLPVYAEILADLRAAGATWVQLDEPALVQDRTPAELNAAARAYRELGGRADRPQLLVASYFGRLGEALAVLAKAPVDGLALDFTESGAGNLDDLAAAGGLPGKRLVAGVVNGRNIWINDYAKSLATLGTLLGLADRVDVSASCSLLHVPLDADAERGIDPETARWLAFAKQKTEEIVVLARGLGSGTDAIASELAANRADLASRTGAALTRDPAVRARTAAVTEADGRRSQPYAERSAAQRAGLGLPLLPTTTIGSFPQTTELRTARAELRAGRIDEAEYEERVKDEIREVLSFQEKAGIDVLVHGEPERNDMVQYFAEQLDGYLATQHGWVQSYGTRYVRPPVLAGDISRPEPMTVRWTTYAQSLTARPVKGMLTGPVTMLAWSFVRDDQPLGDTARQVALALRDEVNDLEANGTSVIQVDEPALRETLPLRAAEHAAYLEWATESFRIATSGVRPDTQIHTHMCYAEFGDIVQAIDDLDADVISLEAARSHMQVARELAAHGYPREAGPGVYDIHSPRIPGAEEAAALLRKGLEAIPAERLWVNPDCGLKTRGWPETRASLENLVAAARQIRAELPTGAA.

5-methyltetrahydropteroyltri-L-glutamate-binding positions include 24–27 (RELK) and K120. Residues 446 to 448 (IGS) and E499 contribute to the L-homocysteine site. L-methionine contacts are provided by residues 446–448 (IGS) and E499. Residue W576 participates in 5-methyltetrahydropteroyltri-L-glutamate binding. Position 614 (D614) interacts with L-homocysteine. An L-methionine-binding site is contributed by D614. Position 620 (E620) interacts with 5-methyltetrahydropteroyltri-L-glutamate. 3 residues coordinate Zn(2+): H656, C658, and E680. H709 acts as the Proton donor in catalysis. A Zn(2+)-binding site is contributed by C741.

The protein belongs to the vitamin-B12 independent methionine synthase family. Zn(2+) serves as cofactor.

The enzyme catalyses 5-methyltetrahydropteroyltri-L-glutamate + L-homocysteine = tetrahydropteroyltri-L-glutamate + L-methionine. It functions in the pathway amino-acid biosynthesis; L-methionine biosynthesis via de novo pathway; L-methionine from L-homocysteine (MetE route): step 1/1. Catalyzes the transfer of a methyl group from 5-methyltetrahydrofolate to homocysteine resulting in methionine formation. The chain is 5-methyltetrahydropteroyltriglutamate--homocysteine methyltransferase from Streptomyces griseus subsp. griseus (strain JCM 4626 / CBS 651.72 / NBRC 13350 / KCC S-0626 / ISP 5235).